Here is a 354-residue protein sequence, read N- to C-terminus: Serum paraoxonase/lactonase 3 (354 aa).

C42 and C352 are joined by a disulfide. Residue N50 is glycosylated (N-linked (GlcNAc...) asparagine). Residues E53 and D54 each coordinate Ca(2+). H114 functions as the Proton acceptor in the catalytic mechanism. I116 provides a ligand contact to Ca(2+). S165 is modified (phosphoserine). 5 residues coordinate Ca(2+): N167, N168, N223, D268, and N269. N-linked (GlcNAc...) asparagine glycosylation occurs at N269.

The protein belongs to the paraoxonase family. In terms of assembly, homodimer. The cofactor is Ca(2+). In terms of processing, glycosylated. Post-translationally, the signal sequence is not cleaved.

The protein resides in the secreted. It is found in the extracellular space. The catalysed reaction is a phenyl acetate + H2O = a phenol + acetate + H(+). It catalyses the reaction An aryl dialkyl phosphate + H2O = dialkyl phosphate + an aryl alcohol.. The enzyme catalyses an N-acyl-L-homoserine lactone + H2O = an N-acyl-L-homoserine + H(+). Its function is as follows. Has low activity towards the organophosphate paraxon and aromatic carboxylic acid esters. Rapidly hydrolyzes lactones such as statin prodrugs (e.g. lovastatin). Hydrolyzes aromatic lactones and 5- or 6-member ring lactones with aliphatic substituents but not simple lactones or those with polar substituents. The sequence is that of Serum paraoxonase/lactonase 3 (PON3) from Oryctolagus cuniculus (Rabbit).